A 32-amino-acid chain; its full sequence is Turripeptide XIV-18 (32 aa).

Ile-30 carries the isoleucine amide modification.

In terms of processing, contains 2 disulfide bonds. As to expression, expressed by the venom duct.

It localises to the secreted. This is Turripeptide XIV-18 from Gemmula speciosa (Splendid gem-turris).